The sequence spans 322 residues: Pilin gene-inverting protein (322 aa).

Its function is as follows. May be the site-specific invertase required for pilin gene inversion. Moraxella can express either a Q or I pilin; the inversion of 2 kb of DNA determines which pilin is expressed. This Moraxella lacunata protein is Pilin gene-inverting protein (piv).